A 353-amino-acid chain; its full sequence is Melatonin receptor type 1A (353 aa).

Positions M1 to P26 are disordered. The Extracellular segment spans residues M1–T32. 2 N-linked (GlcNAc...) asparagine glycosylation sites follow: N4 and N9. Residues L33–L53 form a helical membrane-spanning segment. Residues S54 to N66 lie on the Cytoplasmic side of the membrane. The chain crosses the membrane as a helical span at residues I67 to V87. Residues L88 to I105 are Extracellular-facing. C103 and C180 are joined by a disulfide. A helical membrane pass occupies residues S106 to I126. Residues N127–K145 lie on the Cytoplasmic side of the membrane. The chain crosses the membrane as a helical span at residues N146–L166. At F167 to Y190 the chain is on the extracellular side. Residues T191 to L211 traverse the membrane as a helical segment. The Cytoplasmic portion of the chain corresponds to R212–M243. Residues F244 to V264 traverse the membrane as a helical segment. Topologically, residues A265–E277 are extracellular. The chain crosses the membrane as a helical span at residues W278 to Y298. The Cytoplasmic portion of the chain corresponds to G299–V353.

This sequence belongs to the G-protein coupled receptor 1 family. In terms of tissue distribution, expressed in optic tectum and retina, less in neostriatum, hypothalamus and thalamus.

It localises to the cell membrane. In terms of biological role, high affinity receptor for melatonin. The activity of this receptor is mediated by pertussis toxin sensitive G proteins that inhibits adenylate cyclase activity. This Gallus gallus (Chicken) protein is Melatonin receptor type 1A.